Consider the following 883-residue polypeptide: Putative GTP diphosphokinase RSH1, chloroplastic (883 aa).

The transit peptide at 1 to 55 directs the protein to the chloroplast; that stretch reads MTSASSMSVSVECVNICNLTKGDGNARSDCSALSCAWKAPRALTGFLASTAHPPV. The HD domain occupies 172–279; it reads FIIHPVAVAR…VKLADRLHNM (108 aa). Residues 562 to 625 enclose the TGS domain; it reads LGSRVFVFTP…ENAEVVEIVT (64 aa). Residues 710 to 726 show a composition bias toward polar residues; that stretch reads QSQDKSRDTTPAPQNGS. A disordered region spans residues 710–746; the sequence is QSQDKSRDTTPAPQNGSVWAPKVNGKHNKAIKNSSSD. An ACT domain is found at 796 to 867; sequence WLCVVSMDRK…LVLGVLGWSS (72 aa).

The protein belongs to the RelA/SpoT family. In terms of assembly, interacts with RPP5.

The protein localises to the plastid. It is found in the chloroplast. The enzyme catalyses GTP + ATP = guanosine 3'-diphosphate 5'-triphosphate + AMP. May be involved in a rapid plant ppGpp (guanosine 3'-diphosphate 5'-diphosphate)-mediated response to pathogens and other stresses. In Arabidopsis thaliana (Mouse-ear cress), this protein is Putative GTP diphosphokinase RSH1, chloroplastic (RSH1).